We begin with the raw amino-acid sequence, 305 residues long: MTAVLPLPQPLADPAPRDPRQRLQREQLRLGKRLQRQVGQAIADFGMIAPGDKIMVCLSGGKDSYTLLDMLLQLQRKAPVPFSLVAVNLDQKQPDFPAHVLPAYLRGLGVPFAIVEQDTYSVVSRVIPAGKTMCSLCSRLRRGALYAYAQTHGVTKIALGHHRDDIVATFFMNLFHHARLAAMAPKLRSDDGAHVVIRPLAYVREADIAAYAQARQFPIIPCNLCGSQENLQRQQVGKLLQQWDRESPGRVEQIARALGDVRPEQLADRTLFDFLALGRSGDAPSGLDPDPRAWLSAGHATHDSD.

A disordered region spans residues 1–20; that stretch reads MTAVLPLPQPLADPAPRDPR. Residues 59–64 carry the PP-loop motif motif; it reads SGGKDS. The [4Fe-4S] cluster site is built by Cys134, Cys137, and Cys225. The segment at 282–305 is disordered; sequence DAPSGLDPDPRAWLSAGHATHDSD.

The protein belongs to the TtcA family. In terms of assembly, homodimer. Mg(2+) is required as a cofactor. The cofactor is [4Fe-4S] cluster.

The protein localises to the cytoplasm. It carries out the reaction cytidine(32) in tRNA + S-sulfanyl-L-cysteinyl-[cysteine desulfurase] + AH2 + ATP = 2-thiocytidine(32) in tRNA + L-cysteinyl-[cysteine desulfurase] + A + AMP + diphosphate + H(+). It participates in tRNA modification. Catalyzes the ATP-dependent 2-thiolation of cytidine in position 32 of tRNA, to form 2-thiocytidine (s(2)C32). The sulfur atoms are provided by the cysteine/cysteine desulfurase (IscS) system. This Xanthomonas axonopodis pv. citri (strain 306) protein is tRNA-cytidine(32) 2-sulfurtransferase.